A 137-amino-acid polypeptide reads, in one-letter code: Large ribosomal subunit protein uL16 (137 aa).

The disordered stretch occupies residues 1-20 (MLQPSNRKYRKDFKGRNRGV). Basic residues predominate over residues 7 to 17 (RKYRKDFKGRN).

The protein belongs to the universal ribosomal protein uL16 family. Part of the 50S ribosomal subunit.

Its function is as follows. Binds 23S rRNA and is also seen to make contacts with the A and possibly P site tRNAs. This chain is Large ribosomal subunit protein uL16, found in Coxiella burnetii (strain CbuG_Q212) (Coxiella burnetii (strain Q212)).